Here is a 655-residue protein sequence, read N- to C-terminus: MAAGVAAWLPFARAAAIGWMPVANCPMPLAPADKNKRQDELIVLNVSGRRFQTWRTTLERYPDTLLGSTEKEFFFNEDTKEYFFDRDPEVFRCVLNFYRTGKLHYPRYECISAYDDELAFYGILPEIIGDCCYEEYKDRKRENAERLMDDNDSENNQESMPSLSFRQTMWRAFENPHTSTLALVFYYVTGFFIAVSVITNVVETVPCGTVPGSKELPCGERYSVAFFCLDTACVMIFTVEYLLRLFAAPSRYRFIRSVMSIIDVVAIMPYYIGLVMTNNEDVSGAFVTLRVFRVFRIFKFSRHSQGLRILGYTLKSCASELGFLLFSLTMAIIIFATVMFYAEKGSSASKFTSIPASFWYTIVTMTTLGYGDMVPKTIAGKIFGSICSLSGVLVIALPVPVIVSNFSRIYHQNQRADKRRAQKKARLARIRVAKTGSSNAYLHSKRNGLLNEALELTGTPEEEQMGKTTSLIESQHHHLLHCLEKTTGLSYLVDDPLLSVRTSTIKNHEFIDEQMFEQNCMESSMQNYPSTRSPSLSSHSGLTTTCCSRRSKKTTHLPNSNLPATRLRSMQELSTLHIQGSEQPSLTTSRSSLNLKADDGLRPNCKTSQITTAIISIPTPPALTPEGESRPPPASPGPNTNIPSITSNVVKVSAL.

The Cytoplasmic portion of the chain corresponds to 1-182; the sequence is MAAGVAAWLP…FENPHTSTLA (182 aa). Residues 6 to 21 are interaction with KCNIP1 and KCNIP2; the sequence is AAWLPFARAAAIGWMP. Positions 70–78 are interaction with KCNIP1; that stretch reads EKEFFFNED. 4 residues coordinate Zn(2+): H104, C110, C131, and C132. At S153 the chain carries Phosphoserine. A helical transmembrane segment spans residues 183–204; that stretch reads LVFYYVTGFFIAVSVITNVVET. The Extracellular portion of the chain corresponds to 205-223; that stretch reads VPCGTVPGSKELPCGERYS. The helical transmembrane segment at 224-246 threads the bilayer; the sequence is VAFFCLDTACVMIFTVEYLLRLF. Residues 247–253 are Cytoplasmic-facing; the sequence is AAPSRYR. The helical transmembrane segment at 254 to 277 threads the bilayer; that stretch reads FIRSVMSIIDVVAIMPYYIGLVMT. At 278 to 283 the chain is on the extracellular side; sequence NNEDVS. Residues 284-306 form a helical; Voltage-sensor membrane-spanning segment; sequence GAFVTLRVFRVFRIFKFSRHSQG. Residues 307-318 are Cytoplasmic-facing; sequence LRILGYTLKSCA. The helical transmembrane segment at 319-343 threads the bilayer; it reads SELGFLLFSLTMAIIIFATVMFYAE. Topologically, residues 344-352 are extracellular; it reads KGSSASKFT. Residues 353–366 constitute an intramembrane region (helical); that stretch reads SIPASFWYTIVTMT. K(+) contacts are provided by T367, L368, G369, and Y370. A Selectivity filter motif is present at residues 367–372; it reads TLGYGD. Residues 367-374 lie within the membrane without spanning it; sequence TLGYGDMV. Residues 378–400 form a helical membrane-spanning segment; that stretch reads IAGKIFGSICSLSGVLVIALPVP. Residues 401–655 are Cytoplasmic-facing; the sequence is VIVSNFSRIY…TSNVVKVSAL (255 aa). T459 carries the phosphothreonine modification. Residues 470-487 are interaction with KCNIP1 and KCNIP2; that stretch reads SLIESQHHHLLHCLEKTT. Residues 472-487 are mediates dendritic targeting; it reads IESQHHHLLHCLEKTT. The interval 523-565 is disordered; it reads SSMQNYPSTRSPSLSSHSGLTTTCCSRRSKKTTHLPNSNLPAT. Residues 529–548 show a composition bias toward low complexity; the sequence is PSTRSPSLSSHSGLTTTCCS. S569 and S585 each carry phosphoserine. A disordered region spans residues 615–655; that stretch reads ISIPTPPALTPEGESRPPPASPGPNTNIPSITSNVVKVSAL. Positions 637 to 655 are enriched in polar residues; the sequence is GPNTNIPSITSNVVKVSAL.

Belongs to the potassium channel family. D (Shal) (TC 1.A.1.2) subfamily. Kv4.3/KCND3 sub-subfamily. As to quaternary structure, homotetramer. Heterotetramer with KCND2. Associates with the regulatory subunit KCNIP3. Associates with the regulatory subunit KCNIP4. Interacts with KCNE1, KCNE2, SCN1B and KCNAB1 and DLG1. Component of heteromultimeric potassium channels. Identified in potassium channel complexes containing KCND1, KCND2, KCND3, KCNIP1, KCNIP2, KCNIP3, KCNIP4, DPP6 and DPP10. Interacts with KCNIP1; each KCNIP1 monomer interacts with two adjacent KCND3 subunits, through both the N-terminal inactivation ball of a KCND3 subunit and a C-terminal helix from the adjacent KCND3 subunit, clamping them together; this interaction stabilizes the tetrameric form and modulates the channel gating kinetics namely channel activation and inactivation kinetics and rate of recovery from inactivation. Interacts with DPP6; this interaction modulates the channel gating kinetics namely channel activation and inactivation kinetics and rate of recovery from inactivation. Interacts with KCNIP2; each KCNIP2 monomer interacts with two adjacent KCND3 subunits, through both the N-terminal inactivation ball of a KCND3 subunit and a C-terminal helix from the adjacent KCND3 subunit, clamping them together; this interaction modulates the channel gating kinetics. Regulated through phosphorylation at Ser-569 by CaMK2D.

It localises to the cell membrane. Its subcellular location is the sarcolemma. It is found in the cell projection. The protein resides in the dendrite. The catalysed reaction is K(+)(in) = K(+)(out). In terms of biological role, pore-forming (alpha) subunit of voltage-gated A-type potassium channels that mediates transmembrane potassium transport in excitable membranes, in brain and heart. In cardiomyocytes, may generate the transient outward potassium current I(To). In neurons, may conduct the transient subthreshold somatodendritic A-type potassium current (ISA). Kinetics properties are characterized by fast activation at subthreshold membrane potentials, rapid inactivation, and quick recovery from inactivation. Channel properties are modulated by interactions with regulatory subunits. Interaction with the regulatory subunits KCNIP1 or KCNIP2 modulates the channel gating kinetics namely channel activation and inactivation kinetics and rate of recovery from inactivation. Likewise, interaction with DPP6 modulates the channel gating kinetics namely channel activation and inactivation kinetics. This is A-type voltage-gated potassium channel KCND3 from Mus musculus (Mouse).